A 255-amino-acid polypeptide reads, in one-letter code: tRNA uridine(34) hydroxylase (255 aa).

Residues 125–219 (ATPDTILLDV…YLEQIPESES (95 aa)) enclose the Rhodanese domain. The active-site Cysteine persulfide intermediate is the Cys179.

The protein belongs to the TrhO family.

The enzyme catalyses uridine(34) in tRNA + AH2 + O2 = 5-hydroxyuridine(34) in tRNA + A + H2O. Functionally, catalyzes oxygen-dependent 5-hydroxyuridine (ho5U) modification at position 34 in tRNAs. This chain is tRNA uridine(34) hydroxylase, found in Nitrobacter winogradskyi (strain ATCC 25391 / DSM 10237 / CIP 104748 / NCIMB 11846 / Nb-255).